The primary structure comprises 283 residues: Phosphatidylserine decarboxylase proenzyme (283 aa).

Residues Asp96, His152, and Ser250 each act as charge relay system; for autoendoproteolytic cleavage activity in the active site. The active-site Schiff-base intermediate with substrate; via pyruvic acid; for decarboxylase activity is the Ser250. Ser250 carries the post-translational modification Pyruvic acid (Ser); by autocatalysis.

This sequence belongs to the phosphatidylserine decarboxylase family. PSD-B subfamily. Prokaryotic type I sub-subfamily. Heterodimer of a large membrane-associated beta subunit and a small pyruvoyl-containing alpha subunit. Requires pyruvate as cofactor. Is synthesized initially as an inactive proenzyme. Formation of the active enzyme involves a self-maturation process in which the active site pyruvoyl group is generated from an internal serine residue via an autocatalytic post-translational modification. Two non-identical subunits are generated from the proenzyme in this reaction, and the pyruvate is formed at the N-terminus of the alpha chain, which is derived from the carboxyl end of the proenzyme. The autoendoproteolytic cleavage occurs by a canonical serine protease mechanism, in which the side chain hydroxyl group of the serine supplies its oxygen atom to form the C-terminus of the beta chain, while the remainder of the serine residue undergoes an oxidative deamination to produce ammonia and the pyruvoyl prosthetic group on the alpha chain. During this reaction, the Ser that is part of the protease active site of the proenzyme becomes the pyruvoyl prosthetic group, which constitutes an essential element of the active site of the mature decarboxylase.

It localises to the cell membrane. It carries out the reaction a 1,2-diacyl-sn-glycero-3-phospho-L-serine + H(+) = a 1,2-diacyl-sn-glycero-3-phosphoethanolamine + CO2. It participates in phospholipid metabolism; phosphatidylethanolamine biosynthesis; phosphatidylethanolamine from CDP-diacylglycerol: step 2/2. In terms of biological role, catalyzes the formation of phosphatidylethanolamine (PtdEtn) from phosphatidylserine (PtdSer). This Acinetobacter baumannii (strain ACICU) protein is Phosphatidylserine decarboxylase proenzyme.